The primary structure comprises 657 residues: WD repeat-containing protein 70 (657 aa).

Disordered regions lie at residues 1-21 (MEHSGTSEVTGADTAGPDPQL) and 43-172 (FEQT…PVQR). A compositionally biased stretch (basic and acidic residues) spans 45–78 (QTRRTAVERSRKTLEAREKEEEMNREKELRKQIE). Over residues 82–105 (PAPSSSSAARERSQSSCRDTSSSD) the composition is skewed to low complexity. Acidic residues-rich tracts occupy residues 106–119 (SESDDSSDSSDDEL) and 150–168 (EEGEDDDDDELDDEGEEDN). WD repeat units lie at residues 183-222 (HGTKTVSALGLDPSGARLVTGGYDYDVKFWDFAGMDASFK), 230-271 (CECH…ECIK), 284-324 (GHTA…KQKS), 333-372 (GKKVIPTTCTYSRDGNLVAAACQNGSIQIWDRNLTVHPKF), 379-418 (DPGTDTSCVAFSYDGNVLASRGGDDTLKLWDVRQFNKPLF), 424-469 (PTLF…RVYE), and 472-511 (ITDASVVRCLWHPKLNQIMVGTGNGLAKVYYDPNKSQRGA). K299 participates in a covalent cross-link: Glycyl lysine isopeptide (Lys-Gly) (interchain with G-Cter in SUMO2). K455 carries the post-translational modification N6-acetyllysine. Over residues 543-568 (REPRQRSTRKQLEKDRLDPLKSHKPE) the composition is skewed to basic and acidic residues. The interval 543 to 584 (REPRQRSTRKQLEKDRLDPLKSHKPEPPVAGPGRGGRVGTHG) is disordered. Residues 574–584 (PGRGGRVGTHG) show a composition bias toward gly residues. At T582 the chain carries Phosphothreonine. Glycyl lysine isopeptide (Lys-Gly) (interchain with G-Cter in SUMO2) cross-links involve residues K593 and K599. Residues S624 and S641 each carry the phosphoserine modification. A disordered region spans residues 634-657 (TMFAQVESDDEESKNEPEWKKRKI). The segment covering 647–657 (KNEPEWKKRKI) has biased composition (basic and acidic residues).

It belongs to the WD repeat GAD-1 family.

The chain is WD repeat-containing protein 70 (Wdr70) from Mus musculus (Mouse).